Here is a 198-residue protein sequence, read N- to C-terminus: Undecaprenyl phosphate transporter A (198 aa).

A run of 5 helical transmembrane segments spans residues 15–35 (MGYA…EIVL), 47–67 (IGFI…QIFI), 107–127 (VVFS…PAGI), 135–155 (FVVL…YLGI), and 169–189 (GTYT…YFVI).

The protein belongs to the DedA family.

The protein resides in the cell membrane. Its function is as follows. Flippase that catalyzes the transport of undecaprenyl phosphate (UndP) across the cytoplasmic membrane, from the external side to the cytoplasmic side. Is involved in UndP recycling during peptidoglycan synthesis. In Bacillus subtilis (strain 168), this protein is Undecaprenyl phosphate transporter A.